Reading from the N-terminus, the 715-residue chain is Fatty acid oxidation complex subunit alpha (715 aa).

The enoyl-CoA hydratase/isomerase stretch occupies residues 1–190 (MIYQGKAITV…KVGAVDAVVA (190 aa)). D297 contacts substrate. The 3-hydroxyacyl-CoA dehydrogenase stretch occupies residues 312 to 715 (HDAKQAAVLG…MAKNGQRFFN (404 aa)). Residues M325, D344, 401 to 403 (VVE), K408, and S430 contribute to the NAD(+) site. Residue H451 is the For 3-hydroxyacyl-CoA dehydrogenase activity of the active site. Residue N454 participates in NAD(+) binding. N501 and Y660 together coordinate substrate.

This sequence in the N-terminal section; belongs to the enoyl-CoA hydratase/isomerase family. It in the C-terminal section; belongs to the 3-hydroxyacyl-CoA dehydrogenase family. Heterotetramer of two alpha chains (FadB) and two beta chains (FadA).

It catalyses the reaction a (3S)-3-hydroxyacyl-CoA + NAD(+) = a 3-oxoacyl-CoA + NADH + H(+). The catalysed reaction is a (3S)-3-hydroxyacyl-CoA = a (2E)-enoyl-CoA + H2O. The enzyme catalyses a 4-saturated-(3S)-3-hydroxyacyl-CoA = a (3E)-enoyl-CoA + H2O. It carries out the reaction (3S)-3-hydroxybutanoyl-CoA = (3R)-3-hydroxybutanoyl-CoA. It catalyses the reaction a (3Z)-enoyl-CoA = a 4-saturated (2E)-enoyl-CoA. The catalysed reaction is a (3E)-enoyl-CoA = a 4-saturated (2E)-enoyl-CoA. The protein operates within lipid metabolism; fatty acid beta-oxidation. Involved in the aerobic and anaerobic degradation of long-chain fatty acids via beta-oxidation cycle. Catalyzes the formation of 3-oxoacyl-CoA from enoyl-CoA via L-3-hydroxyacyl-CoA. It can also use D-3-hydroxyacyl-CoA and cis-3-enoyl-CoA as substrate. In Ectopseudomonas oleovorans (Pseudomonas oleovorans), this protein is Fatty acid oxidation complex subunit alpha.